The primary structure comprises 468 residues: Zinc finger CCCH domain-containing protein 32 (468 aa).

The disordered stretch occupies residues 1 to 25 (MYARNPPLNGSQSAQAPDWTPADAD). 5 C3H1-type zinc fingers span residues 45 to 73 (RPGA…HPRD), 90 to 118 (RFGE…HPKN), 136 to 164 (REGD…HPQP), 289 to 317 (RPGE…HPRD), and 335 to 363 (RPGV…HPMG).

It localises to the nucleus. The sequence is that of Zinc finger CCCH domain-containing protein 32 from Arabidopsis thaliana (Mouse-ear cress).